Here is a 281-residue protein sequence, read N- to C-terminus: Shikimate dehydrogenase (NADP(+)) (281 aa).

Shikimate is bound by residues 19–21 (SFS) and T66. The active-site Proton acceptor is the K70. Positions 91 and 104 each coordinate shikimate. Residues 127–131 (GAGGA) and I223 each bind NADP(+). Y225 contributes to the shikimate binding site. G246 is an NADP(+) binding site.

This sequence belongs to the shikimate dehydrogenase family. As to quaternary structure, homodimer.

The enzyme catalyses shikimate + NADP(+) = 3-dehydroshikimate + NADPH + H(+). Its pathway is metabolic intermediate biosynthesis; chorismate biosynthesis; chorismate from D-erythrose 4-phosphate and phosphoenolpyruvate: step 4/7. Functionally, involved in the biosynthesis of the chorismate, which leads to the biosynthesis of aromatic amino acids. Catalyzes the reversible NADPH linked reduction of 3-dehydroshikimate (DHSA) to yield shikimate (SA). The sequence is that of Shikimate dehydrogenase (NADP(+)) from Methanobrevibacter smithii (strain ATCC 35061 / DSM 861 / OCM 144 / PS).